The following is a 263-amino-acid chain: Imidazole glycerol phosphate synthase subunit HisF (263 aa).

Residues D11 and D130 contribute to the active site.

Belongs to the HisA/HisF family. As to quaternary structure, heterodimer of HisH and HisF.

The protein resides in the cytoplasm. The catalysed reaction is 5-[(5-phospho-1-deoxy-D-ribulos-1-ylimino)methylamino]-1-(5-phospho-beta-D-ribosyl)imidazole-4-carboxamide + L-glutamine = D-erythro-1-(imidazol-4-yl)glycerol 3-phosphate + 5-amino-1-(5-phospho-beta-D-ribosyl)imidazole-4-carboxamide + L-glutamate + H(+). Its pathway is amino-acid biosynthesis; L-histidine biosynthesis; L-histidine from 5-phospho-alpha-D-ribose 1-diphosphate: step 5/9. Its function is as follows. IGPS catalyzes the conversion of PRFAR and glutamine to IGP, AICAR and glutamate. The HisF subunit catalyzes the cyclization activity that produces IGP and AICAR from PRFAR using the ammonia provided by the HisH subunit. The protein is Imidazole glycerol phosphate synthase subunit HisF of Herpetosiphon aurantiacus (strain ATCC 23779 / DSM 785 / 114-95).